Consider the following 215-residue polypeptide: MWRDDLPRFQPSHCRPLTVFTRPLARLIEQFERLPGIGPRTAQRLALHLLRQPEEQSRAFADALLAARQQVGQCQRCGHLSADPICDICRNPERNIGVICVVADSRDLLALERTREFSGSYHVLGGLISPMDGIGPEALGIQPLLQRLDPEQVEEVILALTPSVEGDTTSLYLARLLKPFCRVTRIAYGLPVGSELEYADDVTLARALEGRRIVE.

The segment at 74 to 89 adopts a C4-type zinc-finger fold; it reads CQRCGHLSADPICDIC. Residues 97–191 enclose the Toprim domain; sequence GVICVVADSR…RVTRIAYGLP (95 aa).

This sequence belongs to the RecR family.

In terms of biological role, may play a role in DNA repair. It seems to be involved in an RecBC-independent recombinational process of DNA repair. It may act with RecF and RecO. The sequence is that of Recombination protein RecR from Synechococcus sp. (strain RCC307).